The sequence spans 177 residues: NADH-quinone oxidoreductase subunit B (177 aa).

Residues C56, C57, C121, and C151 each coordinate [4Fe-4S] cluster.

Belongs to the complex I 20 kDa subunit family. NDH-1 is composed of 14 different subunits. Subunits NuoB, C, D, E, F, and G constitute the peripheral sector of the complex. Requires [4Fe-4S] cluster as cofactor.

It is found in the cell inner membrane. The catalysed reaction is a quinone + NADH + 5 H(+)(in) = a quinol + NAD(+) + 4 H(+)(out). Functionally, NDH-1 shuttles electrons from NADH, via FMN and iron-sulfur (Fe-S) centers, to quinones in the respiratory chain. Couples the redox reaction to proton translocation (for every two electrons transferred, four hydrogen ions are translocated across the cytoplasmic membrane), and thus conserves the redox energy in a proton gradient. This is NADH-quinone oxidoreductase subunit B from Dinoroseobacter shibae (strain DSM 16493 / NCIMB 14021 / DFL 12).